The following is a 250-amino-acid chain: Methylthioribulose-1-phosphate dehydratase (250 aa).

Residue Cys-103 coordinates substrate. Zn(2+)-binding residues include His-121 and His-123. Glu-146 functions as the Proton donor/acceptor in the catalytic mechanism. His-211 provides a ligand contact to Zn(2+).

This sequence belongs to the aldolase class II family. MtnB subfamily. Zn(2+) serves as cofactor.

It localises to the cytoplasm. The catalysed reaction is 5-(methylsulfanyl)-D-ribulose 1-phosphate = 5-methylsulfanyl-2,3-dioxopentyl phosphate + H2O. Its pathway is amino-acid biosynthesis; L-methionine biosynthesis via salvage pathway; L-methionine from S-methyl-5-thio-alpha-D-ribose 1-phosphate: step 2/6. Its function is as follows. Catalyzes the dehydration of methylthioribulose-1-phosphate (MTRu-1-P) into 2,3-diketo-5-methylthiopentyl-1-phosphate (DK-MTP-1-P). The sequence is that of Methylthioribulose-1-phosphate dehydratase from Clavispora lusitaniae (strain ATCC 42720) (Yeast).